The primary structure comprises 211 residues: Thiamine-phosphate synthase (211 aa).

4-amino-2-methyl-5-(diphosphooxymethyl)pyrimidine-binding positions include 37 to 41 (QLRIK) and Asn69. Mg(2+)-binding residues include Asp70 and Asp89. Ser108 serves as a coordination point for 4-amino-2-methyl-5-(diphosphooxymethyl)pyrimidine. 134-136 (TQT) contacts 2-[(2R,5Z)-2-carboxy-4-methylthiazol-5(2H)-ylidene]ethyl phosphate. Lys137 provides a ligand contact to 4-amino-2-methyl-5-(diphosphooxymethyl)pyrimidine. Residues Gly166 and 186-187 (VS) each bind 2-[(2R,5Z)-2-carboxy-4-methylthiazol-5(2H)-ylidene]ethyl phosphate.

This sequence belongs to the thiamine-phosphate synthase family. The cofactor is Mg(2+).

It catalyses the reaction 2-[(2R,5Z)-2-carboxy-4-methylthiazol-5(2H)-ylidene]ethyl phosphate + 4-amino-2-methyl-5-(diphosphooxymethyl)pyrimidine + 2 H(+) = thiamine phosphate + CO2 + diphosphate. The catalysed reaction is 2-(2-carboxy-4-methylthiazol-5-yl)ethyl phosphate + 4-amino-2-methyl-5-(diphosphooxymethyl)pyrimidine + 2 H(+) = thiamine phosphate + CO2 + diphosphate. It carries out the reaction 4-methyl-5-(2-phosphooxyethyl)-thiazole + 4-amino-2-methyl-5-(diphosphooxymethyl)pyrimidine + H(+) = thiamine phosphate + diphosphate. It participates in cofactor biosynthesis; thiamine diphosphate biosynthesis; thiamine phosphate from 4-amino-2-methyl-5-diphosphomethylpyrimidine and 4-methyl-5-(2-phosphoethyl)-thiazole: step 1/1. In terms of biological role, condenses 4-methyl-5-(beta-hydroxyethyl)thiazole monophosphate (THZ-P) and 2-methyl-4-amino-5-hydroxymethyl pyrimidine pyrophosphate (HMP-PP) to form thiamine monophosphate (TMP). The sequence is that of Thiamine-phosphate synthase from Salmonella dublin (strain CT_02021853).